We begin with the raw amino-acid sequence, 140 residues long: Protein S40-1 (140 aa).

Residues 16–58 (YFPIRRREDGNEKENNRPVDFRENSERVWNKSSRRSKTTPLPS) form a disordered region. Positions 20-44 (RRREDGNEKENNRPVDFRENSERVW) are enriched in basic and acidic residues.

Belongs to the senescence regulator S40 family.

The protein resides in the cytoplasm. In Arabidopsis thaliana (Mouse-ear cress), this protein is Protein S40-1.